We begin with the raw amino-acid sequence, 219 residues long: MSTPLSQPAAASSSATHVTTKIAAKSDNNLVWLDMEMTGLSPENDRIIEVAMVVTDSELNVLAEGPVLVIHQPDEILDGMDAWNKGTHGRSGLIDKVKASTTTEAQAEADLLDFLKKWVPKSKSPMCGNSICQDRRFMARYMPKLEAYFHYRNLDVSTLKELCKRWQPAIAKGFIKRQQHTAYADIVESIEELRYYRQHFIRDVPQTPEAEALASSVAP.

Positions 30 to 193 constitute an Exonuclease domain; it reads LVWLDMEMTG…ADIVESIEEL (164 aa). The active site involves Tyr151.

It belongs to the oligoribonuclease family.

The protein localises to the cytoplasm. 3'-to-5' exoribonuclease specific for small oligoribonucleotides. This chain is Oligoribonuclease, found in Ralstonia nicotianae (strain ATCC BAA-1114 / GMI1000) (Ralstonia solanacearum).